A 309-amino-acid polypeptide reads, in one-letter code: Formate-nitrite transporter (309 aa).

The Cytoplasmic portion of the chain corresponds to M1–C19. The helical intramembrane region spans G20–K35. Residues A36 to N40 are Cytoplasmic-facing. Residues L41–F68 form a helical membrane-spanning segment. At Y69–A79 the chain is on the extracellular side. The helical transmembrane segment at S80–T100 threads the bilayer. Over G101–K122 the chain is Cytoplasmic. A helical membrane pass occupies residues L123–Y150. Topologically, residues L151–K163 are extracellular. Residues N164–H179 constitute an intramembrane region (helical). At H180–T181 the chain is on the extracellular side. The helical transmembrane segment at F182–L206 threads the bilayer. Residues K207 to G209 are Cytoplasmic-facing. Residues A210–A226 traverse the membrane as a helical segment. Residues G227–T249 are Extracellular-facing. Residues V250–I280 form a helical membrane-spanning segment. Over Y281–N309 the chain is Cytoplasmic.

The protein belongs to the FNT transporter (TC 1.A.16) family. In terms of assembly, homopentamer.

Its subcellular location is the cell membrane. It localises to the vacuole membrane. It carries out the reaction (S)-lactate(in) + H(+)(in) = (S)-lactate(out) + H(+)(out). It catalyses the reaction formate(in) + H(+)(in) = formate(out) + H(+)(out). The catalysed reaction is pyruvate(out) + H(+)(out) = pyruvate(in) + H(+)(in). The enzyme catalyses acetate(out) + H(+)(out) = acetate(in) + H(+)(in). With respect to regulation, inhibited by diethylpyrocarbonate (DEPC). Protonophores, such as 2,4-dinitrophenol and carbonylcyanide-3-chlorophenylhydrazone, abolish transport. Inhibited by phloretin, furosemide, alpha-cyano-4-hydroxy-cinnamate and alpha-fluorocinnamate. Inhibited by the Malaria Box compound MMV007839 and its derivatives BH296 and BH267.meta. Inhibited by the Malaria Box compound MMV000972. Inhibited by broad-specificity anion transport inhibitor NPPB. Functionally, monocarboxylate-proton symporter that mediates the efflux of the waste product lactate in the intraerythrocytic parasites; active in acidic-to-neutral pH range. Transports L-lactate. Transports D-lactate, pyruvate, acetate and formate. Essential for asexual growth but dispensable for the development of gametocytes. This chain is Formate-nitrite transporter, found in Plasmodium falciparum (isolate 3D7).